A 258-amino-acid polypeptide reads, in one-letter code: Proliferating cell nuclear antigen (258 aa).

The DNA-binding element occupies 61-80 (RCDHPVTLGMDLTSLSKILR). A Glycyl lysine isopeptide (Lys-Gly) (interchain with G-Cter in SUMO) cross-link involves residue K127. Residue K164 forms a Glycyl lysine isopeptide (Lys-Gly) (interchain with G-Cter in SUMO); alternate linkage. Residue K164 forms a Glycyl lysine isopeptide (Lys-Gly) (interchain with G-Cter in ubiquitin); alternate linkage.

This sequence belongs to the PCNA family. Homotrimer. Interacts with RAD30. Interacts with MCM10. Interacts with UBP10. Sumoylated on Lys-164, and to a lesser extent on Lys-127 by the UBC9/SIZ1 complex during S-phase; which impairs ubiquitination and function in DNA repair. Post-translationally, monoubiquitinated on Lys-164 by the UBC2/RAD18 complex upon DNA damage, and then polyubiquitinated through 'Lys-63'-linkage by UBC13/MMS2. Ubiquitination is required for UBC2-mediated DNA repair. In terms of processing, lys-164 is deubiquitinated by UBP10.

The protein localises to the nucleus. This protein is an auxiliary protein of DNA polymerase delta and is involved in the control of eukaryotic DNA replication by increasing the polymerase's processibility during elongation of the leading strand. Involved in DNA repair. This chain is Proliferating cell nuclear antigen (POL30), found in Saccharomyces cerevisiae (strain ATCC 204508 / S288c) (Baker's yeast).